We begin with the raw amino-acid sequence, 261 residues long: Homeobox protein engrailed-2b (261 aa).

Basic and acidic residues-rich tracts occupy residues 1–21 (MEEN…DESN), 53–72 (GRRK…RENR), and 100–116 (KKTD…RAET). Disordered stretches follow at residues 1–24 (MEEN…NRAI), 53–125 (GRRK…SSDS), and 152–176 (DRPS…KRPR). Residues 172 to 231 (DKRPRTAFTAEQLQRLKNEFQNNRYLTEQRRQALAQELGLNESQIKIWFQNKRAKIKKAT) constitute a DNA-binding region (homeobox).

This sequence belongs to the engrailed homeobox family.

The protein resides in the nucleus. In Danio rerio (Zebrafish), this protein is Homeobox protein engrailed-2b (eng2b).